The primary structure comprises 94 residues: MKGSSALLVALTVLCICGLTRAEDDNEFFMEFLQTLLVGTPEELYEGPLGKYNVNDMAKAALTELKSCIDELQPVHKEQLVKLLVQVLDAQEDT.

An N-terminal signal peptide occupies residues 1–22 (MKGSSALLVALTVLCICGLTRA).

It belongs to the secretoglobin family. In terms of tissue distribution, expressed in the olfactory mucosa.

Its subcellular location is the secreted. The chain is Secretoglobin family 1C member 1 (Scgb1c1) from Rattus norvegicus (Rat).